Here is a 164-residue protein sequence, read N- to C-terminus: FMN reductase (NADH) RutF (164 aa).

This sequence belongs to the non-flavoprotein flavin reductase family. RutF subfamily.

The catalysed reaction is FMNH2 + NAD(+) = FMN + NADH + 2 H(+). Functionally, catalyzes the reduction of FMN to FMNH2 which is used to reduce pyrimidine by RutA via the Rut pathway. The polypeptide is FMN reductase (NADH) RutF (Enterobacter sp. (strain 638)).